A 386-amino-acid chain; its full sequence is 3-ketoacyl-CoA thiolase (386 aa).

Cys91 acts as the Acyl-thioester intermediate in catalysis. Catalysis depends on proton acceptor residues His342 and Cys372.

Belongs to the thiolase-like superfamily. Thiolase family. In terms of assembly, heterotetramer of two alpha chains (FadB) and two beta chains (FadA).

Its subcellular location is the cytoplasm. It carries out the reaction an acyl-CoA + acetyl-CoA = a 3-oxoacyl-CoA + CoA. It functions in the pathway lipid metabolism; fatty acid beta-oxidation. Its function is as follows. Catalyzes the final step of fatty acid oxidation in which acetyl-CoA is released and the CoA ester of a fatty acid two carbons shorter is formed. The protein is 3-ketoacyl-CoA thiolase of Pseudoalteromonas atlantica (strain T6c / ATCC BAA-1087).